We begin with the raw amino-acid sequence, 710 residues long: Cyclomaltodextrin glucanotransferase (710 aa).

A signal peptide spans 1 to 27 (MKKTFKLILVLMLSLTLVFGLTAPIQA). Residues aspartate 54, asparagine 56, asparagine 59, asparagine 60, glycine 78, and aspartate 80 each coordinate Ca(2+). 128-129 (YW) contacts substrate. Asparagine 167 lines the Ca(2+) pocket. Histidine 168 serves as a coordination point for substrate. Ca(2+) is bound at residue isoleucine 218. 221–224 (NLFD) is a substrate binding site. Aspartate 227 contacts Ca(2+). Arginine 255 serves as a coordination point for substrate. Aspartate 257 acts as the Nucleophile in catalysis. A substrate-binding site is contributed by 260 to 261 (KH). Ca(2+) is bound at residue histidine 261. Glutamate 285 serves as the catalytic Proton donor. Histidine 355, aspartate 398, and arginine 402 together coordinate substrate. The 78-residue stretch at 526–603 (PLIGHVGPTM…GATSNTYNNI (78 aa)) folds into the IPT/TIG domain. Residues 605–710 (ILTGNQICVR…TGTVIVNWQQ (106 aa)) enclose the CBM20 domain.

The protein belongs to the glycosyl hydrolase 13 family. The cofactor is Ca(2+).

The protein localises to the secreted. The catalysed reaction is Cyclizes part of a (1-&gt;4)-alpha-D-glucan chain by formation of a (1-&gt;4)-alpha-D-glucosidic bond.. Degrades starch to alpha-, beta-, and gamma-cyclodextrins, as well as linear sugars. The polypeptide is Cyclomaltodextrin glucanotransferase (amyA) (Thermoanaerobacterium thermosulfurigenes (Clostridium thermosulfurogenes)).